We begin with the raw amino-acid sequence, 85 residues long: Large ribosomal subunit protein bL27 (85 aa).

It belongs to the bacterial ribosomal protein bL27 family.

In Stutzerimonas stutzeri (strain A1501) (Pseudomonas stutzeri), this protein is Large ribosomal subunit protein bL27.